We begin with the raw amino-acid sequence, 353 residues long: Dihydroorotate dehydrogenase (quinone) (353 aa).

FMN is bound by residues 66–70 (AGFDK) and threonine 90. Lysine 70 provides a ligand contact to substrate. Residue 115 to 119 (NRMGF) coordinates substrate. FMN-binding residues include asparagine 143 and asparagine 176. Asparagine 176 lines the substrate pocket. Serine 179 (nucleophile) is an active-site residue. Residue asparagine 181 coordinates substrate. Residues lysine 212 and threonine 240 each coordinate FMN. 241–242 (NT) is a binding site for substrate. FMN-binding positions include glycine 264, glycine 293, and 314-315 (YT).

It belongs to the dihydroorotate dehydrogenase family. Type 2 subfamily. In terms of assembly, monomer. FMN serves as cofactor.

The protein resides in the cell membrane. The catalysed reaction is (S)-dihydroorotate + a quinone = orotate + a quinol. It participates in pyrimidine metabolism; UMP biosynthesis via de novo pathway; orotate from (S)-dihydroorotate (quinone route): step 1/1. Its function is as follows. Catalyzes the conversion of dihydroorotate to orotate with quinone as electron acceptor. This Mycolicibacterium gilvum (strain PYR-GCK) (Mycobacterium gilvum (strain PYR-GCK)) protein is Dihydroorotate dehydrogenase (quinone).